We begin with the raw amino-acid sequence, 84 residues long: Double gene block protein 2 (84 aa).

Residues 1–4 (MPSA) are Lumenal-facing. Residues 5 to 25 (NLHPIVLTGVIGLMLLIRLRC) traverse the membrane as a helical segment. The Cytoplasmic segment spans residues 26-30 (TFTST). Residues 31 to 51 (FSLPPLVTLNQIIALSFCGLL) form a helical membrane-spanning segment. The Lumenal portion of the chain corresponds to 52 to 84 (LNSISRAERACYYNYSVDSSKQQHISISTPNGK).

It belongs to the carmovirus double gene block protein 2 family.

The protein resides in the host endoplasmic reticulum membrane. Cell-to-cell movement function. The protein is Double gene block protein 2 of Carnation mottle virus (isolate China/Shanghai) (CarMV).